We begin with the raw amino-acid sequence, 340 residues long: MAEAITSVPAKSSLSAFWWASKHPPADPTTSFAGKTILITGPNAGLGYEAALKFAALGASQLIFGVRSLARGKEAKASIEAKTKCAPSVIHLLQLDMASYASIESFAREVNSKFPVVHAAVLNAGVAPPAYKRSPEGWEMALQVNVISTAYLAILLLPKLRATGIAAGEPTHLEFVTSVGHGDVAVETVRDARSILGKVNEEANFKFTAQYSITKLLEMWVMRHVAAAARSSEVIVNGACPSLCKSSLGRDFSIMLRAPDSLMKAIIGRTAEQGSRILVSAVTTGQKAHGGFWSHDRIAVPGVLVTSDEGKKLSEQFWKEILDELSKQNPDVEKLLSESS.

NADP(+)-binding residues include Leu46, Arg71, Asp96, Asn123, Tyr211, and Lys215. Tyr211 (proton acceptor) is an active-site residue. Catalysis depends on Lys215, which acts as the Lowers pKa of active site Tyr.

It belongs to the short-chain dehydrogenases/reductases (SDR) family.

It functions in the pathway mycotoxin biosynthesis. Its function is as follows. Short-chain dehydrogenase/reductase; part of the gene cluster that mediates the biosynthesis of the cytotoxic leucine-containing cytochalasans, including aspochalasin C, aspochalasin E, TMC-169, flavichalasine F, aspergillin PZ, aspochalasin M and flavichalasine G. The first step in the pathway is catalyzed by the hybrid PKS-NRPS ffsA that utilizes 8 units of malonyl-CoA to iteratively assemble the octaketide chain before addition of L-leucine by the C-terminal NRPS modules. Because ffsA lacks a designated enoylreductase (ER) domain, the required activity is provided the enoyl reductase fssC. The methyltransferase (MT) domain of ffsA catalyzes the alpha-methylation at C10 and C14 using S-adenosyl-L-methionine as the methyl-donating cosubstrate. Reduction by the hydrolyase ffsE, followed by dehydration and intra-molecular Diels-Alder cyclization by the Diels-Alderase ffsF then yield the required isoindolone-fused macrocycle. A number of oxidative steps catalyzed by the tailoring cytochrome P450 monooxygenase ffsD, the FAD-linked oxidoreductase ffsJ and the short-chain dehydrogenase/reductase ffsI, are further required to afford the final products. This Aspergillus flavipes protein is Short-chain dehydrogenase/reductase ffsI.